A 365-amino-acid polypeptide reads, in one-letter code: Probable G-protein coupled receptor 142 (365 aa).

Residues 1–66 (MHLNSNPNSY…WPESPERSPC (66 aa)) lie on the Extracellular side of the membrane. An N-linked (GlcNAc...) asparagine glycan is attached at N44. The chain crosses the membrane as a helical span at residues 67–87 (VAGIIPVIYYSVLLSLGLPVA). The Cytoplasmic segment spans residues 88-102 (LARLAARTRKPSYHY). The helical transmembrane segment at 103–123 (LLALTASDIVTQVIIVFVGFL) threads the bilayer. Topologically, residues 124–140 (LQGAVLARQVPQAVVRT) are extracellular. Residues 141–161 (ANILEFAANHASVWIAVLFTV) traverse the membrane as a helical segment. Topologically, residues 162 to 185 (DRYNALCRPLRHRATSSPGRTHRA) are cytoplasmic. A helical membrane pass occupies residues 186–206 (IAAVIGVTLLTGIPFYWWLDV). The Extracellular segment spans residues 207-224 (WRDADPPSTMDKLLKWAH). The chain crosses the membrane as a helical span at residues 225 to 245 (CLIVYFIPCNVFLVTNSAIIL). Topologically, residues 246 to 264 (RLRKRGQRGLRPLVSKSTA) are cytoplasmic. The chain crosses the membrane as a helical span at residues 265–285 (ILLGVTSLFALLWAPRIIVML). The Extracellular segment spans residues 286-304 (YHLYVAPVHRDWRVHLALD). The chain crosses the membrane as a helical span at residues 305–325 (IANMLAMLNTEVNFGLYCFIS). Topologically, residues 326–365 (KTFRATVRQVICDVHMACALKSQPKQTVVELMLKSVGTEL) are cytoplasmic.

It belongs to the G-protein coupled receptor 1 family.

It localises to the cell membrane. In terms of biological role, orphan receptor. The polypeptide is Probable G-protein coupled receptor 142 (Gpr142) (Mus musculus (Mouse)).